The sequence spans 685 residues: Probable transcriptional regulator SLK3 (685 aa).

2 disordered regions span residues 25-66 (NLPG…ENSY) and 108-129 (LQQQ…SQRL). Residues 39 to 56 (QHLPQQQQRQLLEQQAGQ) show a composition bias toward low complexity. Positions 176-423 (PAENCITYWR…EHKVGPLEGL (248 aa)) are dimerization. Residues 185-199 (RKFVAEYFSPRAKQR) carry the Nuclear localization signal motif. The segment covering 447–459 (GNSGAMSGPAQAQ) has biased composition (polar residues). Disordered regions lie at residues 447–491 (GNSG…MNGS), 512–591 (NNQN…NTQE), and 611–658 (QQQA…NNLP). Low complexity predominate over residues 460-471 (MTLSSGTMSGST). Positions 512-524 (NNQNSNTGNQEGF) are enriched in polar residues. Residues 525 to 543 (SSQNPTLNSNQSPSSSSQQ) show a composition bias toward low complexity. Composition is skewed to polar residues over residues 544-588 (RENL…SHGN), 611-636 (QQQA…TSNI), and 645-658 (RINS…NNLP).

Belongs to the adn1/SEU family.

Its subcellular location is the nucleus. Functionally, probable transcription regulator that functions in the development of the carpel margin meristem similarly to SEUSS (SEU). In association with SEU, supports organ development from meristematic regions by facilitating auxin response and thus organ initiation, and by sustaining meristematic potential through the maintenance of PHABULOSA expression. This chain is Probable transcriptional regulator SLK3 (SLK3), found in Arabidopsis thaliana (Mouse-ear cress).